We begin with the raw amino-acid sequence, 273 residues long: Shikimate dehydrogenase (NADP(+)) (273 aa).

Shikimate contacts are provided by residues 15 to 17 (SLS) and Thr62. The Proton acceptor role is filled by Lys66. NADP(+) is bound at residue Glu78. Residues Asn87 and Asp102 each contribute to the shikimate site. NADP(+) is bound by residues 126–130 (GAGGA), 150–155 (NRTIEK), and Ile217. Tyr219 provides a ligand contact to shikimate. Residue Gly240 participates in NADP(+) binding.

The protein belongs to the shikimate dehydrogenase family. In terms of assembly, homodimer.

It carries out the reaction shikimate + NADP(+) = 3-dehydroshikimate + NADPH + H(+). It functions in the pathway metabolic intermediate biosynthesis; chorismate biosynthesis; chorismate from D-erythrose 4-phosphate and phosphoenolpyruvate: step 4/7. Involved in the biosynthesis of the chorismate, which leads to the biosynthesis of aromatic amino acids. Catalyzes the reversible NADPH linked reduction of 3-dehydroshikimate (DHSA) to yield shikimate (SA). This is Shikimate dehydrogenase (NADP(+)) from Nitrosopumilus maritimus (strain SCM1).